A 176-amino-acid chain; its full sequence is R-phycoerythrin beta chain (176 aa).

C50 and C61 together coordinate phycourobilin. Position 72 is an N4-methylasparagine (N72). (2R,3E)-phycoerythrobilin is bound by residues C82 and C158.

This sequence belongs to the phycobiliprotein family. As to quaternary structure, heterodimer of an alpha and a beta chain. In terms of processing, contains two covalently linked phycoerythrobilin chromophores and one covalently linked phycourobilin chromophore.

The protein resides in the plastid. It localises to the chloroplast thylakoid membrane. Light-harvesting photosynthetic bile pigment-protein from the phycobiliprotein complex. The chain is R-phycoerythrin beta chain (cpeB) from Aglaothamnion neglectum (Red alga).